The primary structure comprises 315 residues: Peroxidase 4 (315 aa).

The signal sequence occupies residues Met-1–Ala-19. Gln-20 bears the Pyrrolidone carboxylic acid mark. 4 disulfide bridges follow: Cys-30-Cys-110, Cys-63-Cys-68, Cys-116-Cys-311, and Cys-195-Cys-221. The active-site Proton acceptor is His-61. Ca(2+) is bound by residues Asp-62, Val-65, Gly-67, Asp-69, and Ser-71. Residue Pro-158 coordinates substrate. His-188 is a binding site for heme b. A Ca(2+)-binding site is contributed by Thr-189. The N-linked (GlcNAc...) asparagine glycan is linked to Asn-205. Asp-234, Thr-237, and Asp-242 together coordinate Ca(2+).

The protein belongs to the peroxidase family. Classical plant (class III) peroxidase subfamily. It depends on heme b as a cofactor. Requires Ca(2+) as cofactor.

Its subcellular location is the secreted. It carries out the reaction 2 a phenolic donor + H2O2 = 2 a phenolic radical donor + 2 H2O. Its function is as follows. Removal of H(2)O(2), oxidation of toxic reductants, biosynthesis and degradation of lignin, suberization, auxin catabolism, response to environmental stresses such as wounding, pathogen attack and oxidative stress. These functions might be dependent on each isozyme/isoform in each plant tissue. In Arabidopsis thaliana (Mouse-ear cress), this protein is Peroxidase 4 (PER4).